The following is a 322-amino-acid chain: 2-methylene-furan-3-one reductase (322 aa).

NADP(+)-binding positions include lysine 59, 174 to 175, 197 to 200, tyrosine 215, isoleucine 253, 264 to 266, 311 to 312, and 311 to 322; these read GV, STKK, FVL, RA, and RATGKVVVYPIP. Lysine 59 is a substrate binding site.

It belongs to the zinc-containing alcohol dehydrogenase family. Quinone oxidoreductase subfamily. As to quaternary structure, monomer. In terms of processing, the N-terminus is blocked.

The enzyme catalyses 4-hydroxy-2,5-dimethyl-furan-3(2H)-one + NADP(+) = 4-hydroxy-5-methyl-2-methylenefuran-3(2H)-one + NADPH + H(+). Its function is as follows. Enone oxidoreductase involved in the biosynthesis of 4-hydroxy-2,5-dimethyl-3(2H)-furanone (HDMF or furaneol), the key flavor compound in strawberries. Can use both NADH and NADPH as the electron donor. This is 2-methylene-furan-3-one reductase (EO) from Fragaria ananassa (Strawberry).